The sequence spans 457 residues: Interferon regulatory factor 7 (457 aa).

A DNA-binding region (IRF tryptophan pentad repeat) is located at residues R9–R126. At K92 the chain carries N6-acetyllysine; by KAT2A and KAT2B. Residues R238–W410 are necessary for the interaction with NMI. K329 is covalently cross-linked (Glycyl lysine isopeptide (Lys-Gly) (interchain with G-Cter in ubiquitin)). Glycyl lysine isopeptide (Lys-Gly) (interchain with G-Cter in SUMO) cross-links involve residues K398 and K400. Phosphoserine occurs at positions 425, 426, and 429. S431 is modified (phosphoserine; by TBK1 and IKKE). Residues S437, S438, and S441 each carry the phosphoserine modification.

The protein belongs to the IRF family. Monomer. Homodimer; phosphorylation-induced. Heterodimer with IRF3. Interacts with TICAM1 and TICAM2. Interacts with MYD88 and TRAF6. Interacts with NMI; the interaction is direct and leads to the inhibition of IRF7-mediated type I IFN production. Interacts with GBP4; preventing interaction between TRAF6 and IRF7, resulting in impaired TRAF6-mediated IRF7 ubiquitination. Interacts with TARBP2; this interaction prevents IRF7 phosphorylation and activation. Post-translationally, acetylation inhibits its DNA-binding ability and activity. In terms of processing, in response to a viral infection, phosphorylated by TBK1 and IKBKE1. Phosphorylation, and subsequent activation is inhibited by vaccinia virus protein E3. In TLR7- and TLR9-mediated signaling pathway, phosphorylated by IRAK1. TRAF6-mediated ubiquitination is required for IRF7 activation. TRIM35 mediates IRF7 'Lys-48'-linked polyubiquitination and subsequent proteasomal degradation. 'Lys-48'-linked polyubiquitination and subsequent proteasomal degradation is NMI-dependent in response to Sendai virus infection. Ubiquitinated by UBE3C, leading to its degradation. Post-translationally, sumoylated by TRIM28, which inhibits its transactivation activity. In terms of processing, 'Lys-63'-linked ubiquitination by NEURL3 promotes IRF7 activation.

It is found in the nucleus. The protein localises to the cytoplasm. With respect to regulation, in the absence of viral infection, maintained as a monomer in an autoinhibited state and phosphorylation disrupts this autoinhibition leading to the liberation of the DNA-binding and dimerization activities and its nuclear localization where it can activate type I IFN and ISG genes. In terms of biological role, key transcriptional regulator of type I interferon (IFN)-dependent immune responses and plays a critical role in the innate immune response against DNA and RNA viruses. Regulates the transcription of type I IFN genes (IFN-alpha and IFN-beta) and IFN-stimulated genes (ISG) by binding to an interferon-stimulated response element (ISRE) in their promoters. Can efficiently activate both the IFN-beta (IFNB) and the IFN-alpha (IFNA) genes and mediate their induction via both the virus-activated, MyD88-independent pathway and the TLR-activated, MyD88-dependent pathway. Induces transcription of ubiquitin hydrolase USP25 mRNA in response to lipopolysaccharide (LPS) or viral infection in a type I IFN-dependent manner. Required during both the early and late phases of the IFN gene induction but is more critical for the late than for the early phase. Exists in an inactive form in the cytoplasm of uninfected cells and following viral infection, double-stranded RNA (dsRNA), or toll-like receptor (TLR) signaling, becomes phosphorylated by IKBKE and TBK1 kinases. This induces a conformational change, leading to its dimerization and nuclear localization where along with other coactivators it can activate transcription of the type I IFN and ISG genes. Can also play a role in regulating adaptive immune responses by inducing PSMB9/LMP2 expression, either directly or through induction of IRF1. Binds to the Q promoter (Qp) of EBV nuclear antigen 1 a (EBNA1) and may play a role in the regulation of EBV latency. Can activate distinct gene expression programs in macrophages and regulate the anti-tumor properties of primary macrophages. The sequence is that of Interferon regulatory factor 7 (Irf7) from Mus musculus (Mouse).